The sequence spans 276 residues: Ribosomal RNA small subunit methyltransferase A (276 aa).

Asn-27, Leu-29, Gly-54, Glu-75, Asp-101, and Asn-123 together coordinate S-adenosyl-L-methionine.

Belongs to the class I-like SAM-binding methyltransferase superfamily. rRNA adenine N(6)-methyltransferase family. RsmA subfamily.

The protein localises to the cytoplasm. The enzyme catalyses adenosine(1518)/adenosine(1519) in 16S rRNA + 4 S-adenosyl-L-methionine = N(6)-dimethyladenosine(1518)/N(6)-dimethyladenosine(1519) in 16S rRNA + 4 S-adenosyl-L-homocysteine + 4 H(+). Functionally, specifically dimethylates two adjacent adenosines (A1518 and A1519) in the loop of a conserved hairpin near the 3'-end of 16S rRNA in the 30S particle. May play a critical role in biogenesis of 30S subunits. This Bartonella henselae (strain ATCC 49882 / DSM 28221 / CCUG 30454 / Houston 1) (Rochalimaea henselae) protein is Ribosomal RNA small subunit methyltransferase A.